We begin with the raw amino-acid sequence, 148 residues long: Deoxyuridine 5'-triphosphate nucleotidohydrolase (148 aa).

Substrate-binding positions include 67-69 (RSG), Asn80, 84-86 (TID), and Lys94.

The protein belongs to the dUTPase family. Mg(2+) is required as a cofactor.

It carries out the reaction dUTP + H2O = dUMP + diphosphate + H(+). The protein operates within pyrimidine metabolism; dUMP biosynthesis; dUMP from dCTP (dUTP route): step 2/2. In terms of biological role, this enzyme is involved in nucleotide metabolism: it produces dUMP, the immediate precursor of thymidine nucleotides and it decreases the intracellular concentration of dUTP so that uracil cannot be incorporated into DNA. The protein is Deoxyuridine 5'-triphosphate nucleotidohydrolase of Orientia tsutsugamushi (strain Boryong) (Rickettsia tsutsugamushi).